A 459-amino-acid polypeptide reads, in one-letter code: Chromosomal replication initiator protein DnaA (459 aa).

The segment at 1–74 (MQKIETFWHF…DEMAQDHFNE (74 aa)) is domain I, interacts with DnaA modulators. Residues 74–122 (ERISFRLELREPAESEAQTVRTSAQKNREDKKPAAEKTQGVTSRKTNPS) form a domain II region. Residues 87–122 (ESEAQTVRTSAQKNREDKKPAAEKTQGVTSRKTNPS) are disordered. Residues 89 to 98 (EAQTVRTSAQ) are compositionally biased toward polar residues. The span at 99-108 (KNREDKKPAA) shows a compositional bias: basic and acidic residues. Positions 112–122 (QGVTSRKTNPS) are enriched in polar residues. Positions 123–339 (QLNASFTFDA…GALKRVLAFS (217 aa)) are domain III, AAA+ region. Residues G167, G169, K170, and T171 each contribute to the ATP site. The tract at residues 340-459 (RFTGHSISLD…FNALMHILRG (120 aa)) is domain IV, binds dsDNA.

The protein belongs to the DnaA family. Oligomerizes as a right-handed, spiral filament on DNA at oriC.

The protein resides in the cytoplasm. In terms of biological role, plays an essential role in the initiation and regulation of chromosomal replication. ATP-DnaA binds to the origin of replication (oriC) to initiate formation of the DNA replication initiation complex once per cell cycle. Binds the DnaA box (a 9 base pair repeat at the origin) and separates the double-stranded (ds)DNA. Forms a right-handed helical filament on oriC DNA; dsDNA binds to the exterior of the filament while single-stranded (ss)DNA is stabiized in the filament's interior. The ATP-DnaA-oriC complex binds and stabilizes one strand of the AT-rich DNA unwinding element (DUE), permitting loading of DNA polymerase. After initiation quickly degrades to an ADP-DnaA complex that is not apt for DNA replication. Binds acidic phospholipids. The sequence is that of Chromosomal replication initiator protein DnaA from Nitrosomonas europaea (strain ATCC 19718 / CIP 103999 / KCTC 2705 / NBRC 14298).